Here is a 345-residue protein sequence, read N- to C-terminus: Annexin A9 (345 aa).

Annexin repeat units follow at residues 41–112, 113–184, 197–266, and 270–341; these read FSAD…ALLQ, PAAH…ALAK, NLAA…NLAS, and NTPL…ALCR.

Belongs to the annexin family. Homodimer.

Functionally, may act as a low affinity receptor for acetylcholine. The polypeptide is Annexin A9 (ANXA9) (Bos taurus (Bovine)).